A 211-amino-acid chain; its full sequence is tRNA (pseudouridine(54)-N(1))-methyltransferase (211 aa).

S-adenosyl-L-methionine is bound by residues L128, G150, and C183.

It belongs to the methyltransferase superfamily. TrmY family. As to quaternary structure, homodimer.

The protein resides in the cytoplasm. The enzyme catalyses pseudouridine(54) in tRNA + S-adenosyl-L-methionine = N(1)-methylpseudouridine(54) in tRNA + S-adenosyl-L-homocysteine + H(+). Functionally, specifically catalyzes the N1-methylation of pseudouridine at position 54 (Psi54) in tRNAs. The chain is tRNA (pseudouridine(54)-N(1))-methyltransferase from Methanosarcina acetivorans (strain ATCC 35395 / DSM 2834 / JCM 12185 / C2A).